Reading from the N-terminus, the 570-residue chain is Chaperonin GroEL 1 (570 aa).

ATP is bound by residues 42-45 (TLGP), Lys63, 99-103 (DGTTT), Gly427, and Asp507. A disordered region spans residues 537–570 (EDEDDDDGGGGGGGGMPAGGAGGMGGMGGMGGMM). The segment covering 545 to 570 (GGGGGGGMPAGGAGGMGGMGGMGGMM) has biased composition (gly residues).

Belongs to the chaperonin (HSP60) family. Forms a cylinder of 14 subunits composed of two heptameric rings stacked back-to-back. Interacts with the co-chaperonin GroES.

The protein resides in the cytoplasm. The catalysed reaction is ATP + H2O + a folded polypeptide = ADP + phosphate + an unfolded polypeptide.. Together with its co-chaperonin GroES, plays an essential role in assisting protein folding. The GroEL-GroES system forms a nano-cage that allows encapsulation of the non-native substrate proteins and provides a physical environment optimized to promote and accelerate protein folding. The protein is Chaperonin GroEL 1 of Salinibacter ruber (strain DSM 13855 / M31).